Consider the following 288-residue polypeptide: dTDP-4-keto-6-deoxy-D-glucose reductase (288 aa).

Residues G12–L14, D38–I39, A62–T64, Y127, and K131 contribute to the NADH site. NADPH contacts are provided by residues M13–L14, D38–I39, A62–T64, Y127, and K131. Y127 functions as the Proton donor/acceptor in the catalytic mechanism.

The protein belongs to the dTDP-4-dehydrorhamnose reductase family. The cofactor is Mg(2+).

It participates in antibiotic biosynthesis; novobiocin biosynthesis. Functionally, reduces the product formed from the reaction of NovW with dTDP-4-keto-6-deoxy-D-glucose to result in dTDP-5-methyl-L-rhamnose in the novobiocin biosynthesis pathway, an aminocoumarin family antibiotic that targets bacterial DNA gyrases. The sequence is that of dTDP-4-keto-6-deoxy-D-glucose reductase (novS) from Streptomyces niveus (Streptomyces spheroides).